We begin with the raw amino-acid sequence, 196 residues long: Ribonuclease HII (196 aa).

Residues 13-196 (LLVAGVDEAG…SFSPLKKKLF (184 aa)) enclose the RNase H type-2 domain. A divalent metal cation-binding residues include D19, E20, and D111.

The protein belongs to the RNase HII family. The cofactor is Mn(2+). Mg(2+) serves as cofactor.

It is found in the cytoplasm. The catalysed reaction is Endonucleolytic cleavage to 5'-phosphomonoester.. Its function is as follows. Endonuclease that specifically degrades the RNA of RNA-DNA hybrids. The sequence is that of Ribonuclease HII (rnhB) from Aquifex aeolicus (strain VF5).